The primary structure comprises 514 residues: ATP synthase subunit alpha (514 aa).

Position 170–177 (Gly170–Thr177) interacts with ATP.

Belongs to the ATPase alpha/beta chains family. In terms of assembly, F-type ATPases have 2 components, CF(1) - the catalytic core - and CF(0) - the membrane proton channel. CF(1) has five subunits: alpha(3), beta(3), gamma(1), delta(1), epsilon(1). CF(0) has three main subunits: a(1), b(2) and c(9-12). The alpha and beta chains form an alternating ring which encloses part of the gamma chain. CF(1) is attached to CF(0) by a central stalk formed by the gamma and epsilon chains, while a peripheral stalk is formed by the delta and b chains.

The protein resides in the cell inner membrane. It catalyses the reaction ATP + H2O + 4 H(+)(in) = ADP + phosphate + 5 H(+)(out). In terms of biological role, produces ATP from ADP in the presence of a proton gradient across the membrane. The alpha chain is a regulatory subunit. This chain is ATP synthase subunit alpha, found in Acidithiobacillus ferrooxidans (strain ATCC 23270 / DSM 14882 / CIP 104768 / NCIMB 8455) (Ferrobacillus ferrooxidans (strain ATCC 23270)).